A 145-amino-acid chain; its full sequence is Large ribosomal subunit protein uL13 (145 aa).

The protein belongs to the universal ribosomal protein uL13 family. Part of the 50S ribosomal subunit. Interacts weakly with proteins L3 and L6.

This protein is one of the early assembly proteins of the 50S ribosomal subunit. Binds to 23S rRNA. The protein is Large ribosomal subunit protein uL13 of Haloarcula marismortui (strain ATCC 43049 / DSM 3752 / JCM 8966 / VKM B-1809) (Halobacterium marismortui).